Consider the following 118-residue polypeptide: LYR motif containing protein 1 (118 aa).

Positions Thr91–Thr118 are disordered. Positions Lys93–Ala107 are enriched in basic residues.

It belongs to the complex I LYR family.

In Danio rerio (Zebrafish), this protein is LYR motif containing protein 1 (lyrm1).